An 845-amino-acid chain; its full sequence is MVGVKTQGEDILEYGRGYSEDVDIIREREYPQLKDTTYLDHAGTTLYAKSLIEAFSRDLTSNLFGNPHSMSASSQLSTRRVDDVRLRALRFFKADPDDFDLVFVANATAAIKLVADAMRDSRQGFWYGYHVDAHTSLVGARELAAKGNRCFSSDEEVEGWIQSLREAGPESLNLFAYPAQSNLNGRRLPLSWCETIRRRSEAAGGNTYTLLDAASLVSTSPLDLSDAAAAPDFTVLSFYKIFGFPDLGALIVRKSAGHIFEQRRFFGGGTVDMVLTREMQWHAKKQSSIHDRLEDGTLPFHSIIALDSAFATHRRLFGSMENVSSHTRFLAKRLYDKLAALKHSNGERVCQLYTNPFSDYNKAASQGPIIAFNLRNSHGAWIGKSEVERLATVKNIQFRSGSLCNPGGTSGSLGWTGADLLQQFSAGLRCGDDHDVMDGRPTGVLRLSLGAMTNLADINTVIQFVEEFYVERAAAVESLITPVPSIPVQQPRFYIESLSVYPIKSCGAFRVPDGKRWEIRREGLAWDREWCLVHQGTGATLNQKKYPRMALIRPFVDLDRNVLRITCGELTSSDQQVLEVSLDREDTNLVSTSICQRSSKSSTVCGDQVVVQAYSSPSVSRFFSEFLGVPCTLARFPPQSSSRFSPPKRPSGAWKQYLRKFVMPGSFPQDSSPSSAPERNPILLSNESPILLISRSSVNYLNENIKANQKKKKRAEGSSSSRAVAADVFRANIVVAESFTQLPRVESPYVEDHWESLKIGPEHLQLDVLGACQRCSMVCIDQFTGVRRDEPFSTLAKTRKINGKIVFGRHASLASSEVTRDEHDTTERWTLMVGDTVTPSYTHEE.

An N6-(pyridoxal phosphate)lysine modification is found at Lys-240. Cys-404 is an active-site residue. The 175-residue stretch at 666–840 folds into the MOSC domain; sequence SFPQDSSPSS…LMVGDTVTPS (175 aa).

Belongs to the class-V pyridoxal-phosphate-dependent aminotransferase family. MOCOS subfamily. Requires pyridoxal 5'-phosphate as cofactor.

It carries out the reaction Mo-molybdopterin + L-cysteine + AH2 = thio-Mo-molybdopterin + L-alanine + A + H2O. It functions in the pathway cofactor biosynthesis; molybdopterin biosynthesis. Functionally, sulfurates the molybdenum cofactor. Sulfation of molybdenum is essential for xanthine dehydrogenase (XDH) and aldehyde oxidase (ADO) enzymes in which molybdenum cofactor is liganded by 1 oxygen and 1 sulfur atom in active form. This chain is Molybdenum cofactor sulfurase, found in Aspergillus clavatus (strain ATCC 1007 / CBS 513.65 / DSM 816 / NCTC 3887 / NRRL 1 / QM 1276 / 107).